Consider the following 252-residue polypeptide: Adenosine 5'-phosphosulfate reductase (252 aa).

[4Fe-4S] cluster-binding residues include cysteine 125, cysteine 126, cysteine 208, and cysteine 211. The tract at residues 219-252 is disordered; that stretch reads DGYSREGRWSDRDKTECGLHTSPEDEDGAHAAES. Basic and acidic residues predominate over residues 221–235; that stretch reads YSREGRWSDRDKTEC. Cysteine 235 (nucleophile; cysteine thiosulfonate intermediate) is an active-site residue.

This sequence belongs to the PAPS reductase family. CysH subfamily. It depends on [4Fe-4S] cluster as a cofactor.

It localises to the cytoplasm. It carries out the reaction [thioredoxin]-disulfide + sulfite + AMP + 2 H(+) = adenosine 5'-phosphosulfate + [thioredoxin]-dithiol. It functions in the pathway sulfur metabolism; hydrogen sulfide biosynthesis; sulfite from sulfate. In terms of biological role, catalyzes the formation of sulfite from adenosine 5'-phosphosulfate (APS) using thioredoxin as an electron donor. The sequence is that of Adenosine 5'-phosphosulfate reductase from Salinibacter ruber (strain DSM 13855 / M31).